The chain runs to 731 residues: MLCGKENNVMKMMLVYVFVLITLISCVYGNVWYDYRAIKINDQRRILLSGSIHYPRSTPEMWPDIIEKAKDSQLDVIQTYVFWNGHEPSEGKYYFEGRYDLVKFIKLIHQAGLFVHLRIGPFACAEWNFGGFPVWLKYVPGIEFRTDNGPFKEKMQVFTTKIVDMMKAEKLFHWQGGPIILNQIENEYGPVEWEIGAPGKAYTHWAAQMAQSLNAGVPWIMCKQDSDVPDNVIDTCNGFYCEGFVPKDKSKPKMWTENWTGWYTEYGKPVPYRPAEDVAFSVARFIQNGGSFMNYYMFHGGTNFETTAGRFVSTSYDYDAPLDEYGLPREPKYTHLKNLHKAIKMCEPALVSSDAKVTNLGSNQEAHVYSSNSGSCAAFLANYDPKWSVKVTFSGMEFELPAWSISILPDCKKEVYNTARVNEPSPKLHSKMTPVISNLNWQSYSDEVPTADSPGTFREKKLYEQINMTWDKSDYLWYMTDVVLDGNEGFLKKGDEPWLTVNSAGHVLHVFVNGQLQGHAYGSLAKPQLTFSQKVKMTAGVNRISLLSAVVGLANVGWHFERYNQGVLGPVTLSGLNEGTRDLTWQYWSYKIGTKGEEQQVYNSGGSSHVQWGPPAWKQPLVWYKTTFDAPGGNDPLALDLGSMGKGQAWINGQSIGRHWSNNIAKGSCNDNCNYAGTYTETKCLSDCGKSSQKWYHVPRSWLQPRGNLLVVFEEWGGDTKWVSLVKRTIA.

Positions 1–29 are cleaved as a signal peptide; the sequence is MLCGKENNVMKMMLVYVFVLITLISCVYG. Glu-187 functions as the Proton donor in the catalytic mechanism. Catalysis depends on Glu-257, which acts as the Nucleophile.

It belongs to the glycosyl hydrolase 35 family. As to expression, senescing flower petals.

It catalyses the reaction Hydrolysis of terminal non-reducing beta-D-galactose residues in beta-D-galactosides.. The protein is Putative beta-galactosidase (CARSR12) of Dianthus caryophyllus (Carnation).